The chain runs to 160 residues: Phosphopantetheine adenylyltransferase (160 aa).

Thr-9 provides a ligand contact to substrate. Residues 9–10 (TF) and His-17 contribute to the ATP site. 3 residues coordinate substrate: Lys-41, Leu-73, and Arg-87. ATP-binding positions include 88-90 (GLR), Glu-98, and 123-129 (LSYISST).

Belongs to the bacterial CoaD family. Homohexamer. Mg(2+) serves as cofactor.

It is found in the cytoplasm. It catalyses the reaction (R)-4'-phosphopantetheine + ATP + H(+) = 3'-dephospho-CoA + diphosphate. Its pathway is cofactor biosynthesis; coenzyme A biosynthesis; CoA from (R)-pantothenate: step 4/5. Reversibly transfers an adenylyl group from ATP to 4'-phosphopantetheine, yielding dephospho-CoA (dPCoA) and pyrophosphate. This is Phosphopantetheine adenylyltransferase from Marinobacter nauticus (strain ATCC 700491 / DSM 11845 / VT8) (Marinobacter aquaeolei).